The sequence spans 445 residues: POU domain, class 3, transcription factor 2 (445 aa).

Disordered stretches follow at residues 63–173 (TALS…WRSA), 203–269 (LGAG…TPTS), 336–361 (EADS…KKRT), and 411–445 (EKRM…TPVQ). Residues 68–90 (GGSGGGGGGGGGGGGGGGGGGDG) show a composition bias toward gly residues. Low complexity predominate over residues 125 to 151 (QQQHQQQQQQQQQQQQQQQQQQQQQQQ). The span at 217 to 226 (LRDAHDEPHH) shows a compositional bias: basic and acidic residues. A compositionally biased stretch (basic residues) spans 227 to 237 (ADHHPHPHSHP). The span at 239–253 (QQPPPPPPPQGPPGH) shows a compositional bias: pro residues. The 75-residue stretch at 264–338 (EDTPTSDDLE…LLNKWLEEAD (75 aa)) folds into the POU-specific domain. Phosphoserine is present on Ser343. A DNA-binding region (homeobox) is located at residues 356–415 (KRKKRTSIEVSVKGALESHFLKCPKPSAQEITSLADSLQLEKEVVRVWFCNRRQKEKRMT).

The protein belongs to the POU transcription factor family. Class-3 subfamily. Interacts with PQBP1. Interaction with ISL1. In terms of tissue distribution, expressed specifically at high levels in the brain.

The protein resides in the nucleus. Transcription factor that plays a key role in neuronal differentiation. Binds preferentially to the recognition sequence which consists of two distinct half-sites, ('GCAT') and ('TAAT'), separated by a non-conserved spacer region of 0, 2, or 3 nucleotides. Acts as a transcriptional activator when binding cooperatively with SOX4, SOX11, or SOX12 to gene promoters. The combination of three transcription factors, ASCL1, POU3F2/BRN2 and MYT1L, is sufficient to reprogram fibroblasts and other somatic cells into induced neuronal (iN) cells in vitro. Acts downstream of ASCL1, accessing chromatin that has been opened by ASCL1, and promotes transcription of neuronal genes. In Rattus norvegicus (Rat), this protein is POU domain, class 3, transcription factor 2 (Pou3f2).